The chain runs to 23 residues: Unknown protein NF016 from 2D-PAGE (23 aa).

The chain is Unknown protein NF016 from 2D-PAGE from Naegleria fowleri (Brain eating amoeba).